The sequence spans 506 residues: Deoxyribodipyrimidine photo-lyase (506 aa).

Residues 1 to 21 (MPPTSVSPPRTAPGPANPSPA) are compositionally biased toward pro residues. Residues 1–33 (MPPTSVSPPRTAPGPANPSPAHPSRVRVIHPGG) are disordered. The region spanning 38–171 (GPVVYWMLRD…AVHQVDAHNV (134 aa)) is the Photolyase/cryptochrome alpha/beta domain. Residues Tyr268 and 282-285 (SGLS) contribute to the FAD site. Ser312 carries the post-translational modification Phosphoserine. FAD is bound by residues 319-327 (ELVVRRELA), Lys390, Asn421, Asp427, and 427-429 (DGR). The tract at residues 487 to 506 (KKRNAEESPNPVVKLSKSQH) is disordered.

Belongs to the DNA photolyase class-2 family. Requires FAD as cofactor. In terms of tissue distribution, expressed in proliferating tissues. Highly expressed in roots and shoot apical meristem (SAM). Expressed in leaves, flag leaves, and panicle.

It localises to the nucleus. It carries out the reaction cyclobutadipyrimidine (in DNA) = 2 pyrimidine residues (in DNA).. Its function is as follows. Involved in repair of UV radiation-induced DNA damage. Catalyzes the light-dependent monomerization (300-600 nm) of cyclobutylpyrimidine dimers (CPDs), which are formed between adjacent bases on the same DNA strand upon exposure to ultraviolet radiation. Required for plant survival in the presence of UV-B light. Not involved in the repair of (6-4) photoproducts. The polypeptide is Deoxyribodipyrimidine photo-lyase (PHR) (Oryza sativa subsp. japonica (Rice)).